A 152-amino-acid chain; its full sequence is Non-specific lipid transfer protein GPI-anchored 8 (152 aa).

Residues 1 to 23 (MNITRILGVVTTVVILYSVQVTA) form the signal peptide. Cystine bridges form between Cys-42–Cys-56, Cys-57–Cys-98, and Cys-70–Cys-107. Asn-108 is a glycosylation site (N-linked (GlcNAc...) asparagine). Ser-124 carries GPI-anchor amidated serine lipidation. A propeptide spans 125-152 (GNSFSTKKNTALAITFFGFSFVFLGMII) (removed in mature form).

Belongs to the plant LTP family.

Its subcellular location is the cell membrane. Probable lipid transfer protein. The protein is Non-specific lipid transfer protein GPI-anchored 8 of Arabidopsis thaliana (Mouse-ear cress).